Here is a 160-residue protein sequence, read N- to C-terminus: NADH-quinone oxidoreductase subunit I (160 aa).

2 4Fe-4S ferredoxin-type domains span residues 51–80 (RRYK…IEAA) and 91–120 (TKYD…EGPN). Residues cysteine 60, cysteine 63, cysteine 66, cysteine 70, cysteine 100, cysteine 103, cysteine 106, and cysteine 110 each contribute to the [4Fe-4S] cluster site.

The protein belongs to the complex I 23 kDa subunit family. NDH-1 is composed of 14 different subunits. Subunits NuoA, H, J, K, L, M, N constitute the membrane sector of the complex. It depends on [4Fe-4S] cluster as a cofactor.

Its subcellular location is the cell inner membrane. It carries out the reaction a quinone + NADH + 5 H(+)(in) = a quinol + NAD(+) + 4 H(+)(out). Functionally, NDH-1 shuttles electrons from NADH, via FMN and iron-sulfur (Fe-S) centers, to quinones in the respiratory chain. The immediate electron acceptor for the enzyme in this species is believed to be ubiquinone. Couples the redox reaction to proton translocation (for every two electrons transferred, four hydrogen ions are translocated across the cytoplasmic membrane), and thus conserves the redox energy in a proton gradient. In Neorickettsia sennetsu (strain ATCC VR-367 / Miyayama) (Ehrlichia sennetsu), this protein is NADH-quinone oxidoreductase subunit I.